Here is a 494-residue protein sequence, read N- to C-terminus: Tripartite motif-containing protein 5 (494 aa).

Alanine 2 is modified (N-acetylalanine). The segment at 15–59 adopts an RING-type zinc-finger fold; sequence CPICLELLTQPLSLDCGHSFCQACLTANHKTSMPDEGERSCPVCR. Residue serine 86 is modified to Phosphoserine. The B box-type zinc-finger motif lies at 91 to 133; that stretch reads QKVDHCARHGEKLLLFCREDRKVICWLCERSQEHRGHHTFLTE. Zn(2+) contacts are provided by cysteine 96, histidine 99, cysteine 118, and histidine 124. Residues 132–241 are a coiled coil; that stretch reads TEEVAQEYQV…LISDLEHRLQ (110 aa). Residues 186–199 are required for interaction with GABARAP and for autophagy; it reads FEQLRHILDWVESN. The region spanning 282-494 is the B30.2/SPRY domain; sequence LKVMLKKLRE…VPMTLCSPSS (213 aa).

The protein belongs to the TRIM/RBCC family. As to quaternary structure, can form homodimers and homotrimers. In addition to lower-order dimerization, also exhibits a higher-order multimerization and both low- and high-order multimerizations are essential for its restriction activity. Interacts with BTBD1 and BTBD2. Interacts with PSMC4, PSMC5, PSMD7 and HSPA8/HSC70. Interacts (via B30.2/SPRY domain) with HSPA1A/B. Interacts with PSMC2, MAP3K7/TAK1, TAB2 and TAB3. Interacts with SQSTM1. Interacts with TRIM6 and TRIM34. Interacts with ULK1 (phosphorylated form), GABARAP, GABARAPL1, GABARAPL2, MAP1LC3A, MAP1LC3C and BECN1. In terms of processing, degraded in a proteasome-independent fashion in the absence of viral infection but in a proteasome-dependent fashion following exposure to restriction sensitive virus. Post-translationally, autoubiquitinated in a RING finger- and UBE2D2-dependent manner. Monoubiquitinated by TRIM21. Deubiquitinated by Yersinia YopJ. Ubiquitination may not lead to proteasomal degradation.

It is found in the cytoplasm. Its subcellular location is the nucleus. The enzyme catalyses S-ubiquitinyl-[E2 ubiquitin-conjugating enzyme]-L-cysteine + [acceptor protein]-L-lysine = [E2 ubiquitin-conjugating enzyme]-L-cysteine + N(6)-ubiquitinyl-[acceptor protein]-L-lysine.. Its pathway is protein modification; protein ubiquitination. Functionally, capsid-specific restriction factor that prevents infection from non-host-adapted retroviruses. Blocks viral replication early in the life cycle, after viral entry but before reverse transcription. In addition to acting as a capsid-specific restriction factor, also acts as a pattern recognition receptor that activates innate immune signaling in response to the retroviral capsid lattice. Binding to the viral capsid triggers its E3 ubiquitin ligase activity, and in concert with the heterodimeric ubiquitin conjugating enzyme complex UBE2V1-UBE2N (also known as UBC13-UEV1A complex) generates 'Lys-63'-linked polyubiquitin chains, which in turn are catalysts in the autophosphorylation of the MAP3K7/TAK1 complex (includes TAK1, TAB2, and TAB3). Activation of the MAP3K7/TAK1 complex by autophosphorylation results in the induction and expression of NF-kappa-B and MAPK-responsive inflammatory genes, thereby leading to an innate immune response in the infected cell. Plays a role in regulating autophagy through activation of autophagy regulator BECN1 by causing its dissociation from its inhibitors BCL2 and TAB2. This chain is Tripartite motif-containing protein 5 (TRIM5), found in Nomascus leucogenys (Northern white-cheeked gibbon).